The primary structure comprises 331 residues: B-box zinc finger protein 21 (331 aa).

Zn(2+)-binding residues include Cys-5, Cys-8, Cys-28, His-34, Cys-60, Cys-63, Cys-83, and His-93. Residues 5 to 47 (CDVCDKEEASVFCTADEASLCGGCDHQVHHANKLASKHLRFSL) form a B box-type 1; atypical zinc finger. A B box-type 2; atypical zinc finger spans residues 60–102 (CDICQDKKALLFCQQDRAILCKDCDSSIHAANEHTKKHDRFLL). 2 stretches are compositionally biased toward low complexity: residues 115–126 (KPTSKSSSSSSS) and 228–238 (NNNNNNNNNNN). 2 disordered regions span residues 115-167 (KPTS…GGDA) and 209-241 (DDDGVLPYMEPEDDNNTKRNNNNNNNNNNNTVS).

Interacts with COP1, HY5 and BBX32. Interacts with FLZ1.

It is found in the nucleus. Its function is as follows. Transcription activator that acts as a positive regulator of seedling photomorphogenesis. Acts downstream of COP1 and play an important role in early and long-term adjustment of the shade avoidance syndrome (SAS) responses in natural environments. The polypeptide is B-box zinc finger protein 21 (Arabidopsis thaliana (Mouse-ear cress)).